Here is a 705-residue protein sequence, read N- to C-terminus: Ribosomal RNA large subunit methyltransferase K/L (705 aa).

A THUMP domain is found at 43–154 (VVYRCCLWSR…GEKGILGFDL (112 aa)).

It belongs to the methyltransferase superfamily. RlmKL family.

It localises to the cytoplasm. The catalysed reaction is guanosine(2445) in 23S rRNA + S-adenosyl-L-methionine = N(2)-methylguanosine(2445) in 23S rRNA + S-adenosyl-L-homocysteine + H(+). It catalyses the reaction guanosine(2069) in 23S rRNA + S-adenosyl-L-methionine = N(2)-methylguanosine(2069) in 23S rRNA + S-adenosyl-L-homocysteine + H(+). In terms of biological role, specifically methylates the guanine in position 2445 (m2G2445) and the guanine in position 2069 (m7G2069) of 23S rRNA. In Aliivibrio salmonicida (strain LFI1238) (Vibrio salmonicida (strain LFI1238)), this protein is Ribosomal RNA large subunit methyltransferase K/L.